A 453-amino-acid chain; its full sequence is Homogentisate 1,2-dioxygenase (453 aa).

His-306 serves as the catalytic Proton acceptor. The Fe cation site is built by His-349 and Glu-355. Residues Tyr-364 and His-385 each contribute to the homogentisate site. Residue His-385 participates in Fe cation binding.

The protein belongs to the homogentisate dioxygenase family. Hexamer; dimer of trimers. Fe cation is required as a cofactor.

It catalyses the reaction homogentisate + O2 = 4-maleylacetoacetate + H(+). The protein operates within amino-acid degradation; L-phenylalanine degradation; acetoacetate and fumarate from L-phenylalanine: step 4/6. Its function is as follows. Involved in the catabolism of homogentisate (2,5-dihydroxyphenylacetate or 2,5-OH-PhAc), a central intermediate in the degradation of phenylalanine and tyrosine. Catalyzes the oxidative ring cleavage of the aromatic ring of homogentisate to yield maleylacetoacetate. The protein is Homogentisate 1,2-dioxygenase of Rhizobium johnstonii (strain DSM 114642 / LMG 32736 / 3841) (Rhizobium leguminosarum bv. viciae).